The sequence spans 559 residues: Large neutral amino acids transporter small subunit 3 (559 aa).

The helical transmembrane segment at 20-40 (VLENLFFSAVLLGWGSLLIIL) threads the bilayer. N-linked (GlcNAc...) asparagine glycosylation is present at N57. A run of 5 helical transmembrane segments spans residues 78 to 98 (LGFT…GILM), 105 to 124 (PVRL…MALA), 131 to 151 (LSPL…CLTF), 168 to 188 (MALM…IKLI), and 191 to 211 (AGVA…LIFL). N-linked (GlcNAc...) asparagine glycosylation is found at N212 and N229. Phosphoserine occurs at positions 237, 262, and 267. 6 consecutive transmembrane segments (helical) span residues 304 to 324 (FLWS…YMAA), 357 to 377 (SVFG…GYIM), 419 to 439 (AISA…TCLI), 446 to 466 (FVTF…CGSL), 485 to 505 (LISA…VGPL), and 510 to 530 (FWVN…PSYL).

It belongs to the SLC43A transporter (TC 2.A.1.44) family. As to expression, ubiquitously expressed in fetus and adult. Highest expression in adult pancreas, liver, skeletal muscle. In fetus, highest expression in liver and lower levels in kidney, and lung. Exclusively expressed in the glomeruli along the glomerular capillary walls.

It is found in the cell membrane. The protein localises to the apical cell membrane. The protein resides in the endoplasmic reticulum membrane. The enzyme catalyses D-leucine(in) = D-leucine(out). The catalysed reaction is L-leucine(in) = L-leucine(out). It catalyses the reaction L-isoleucine(in) = L-isoleucine(out). It carries out the reaction L-methionine(in) = L-methionine(out). The enzyme catalyses L-phenylalanine(in) = L-phenylalanine(out). The catalysed reaction is L-valine(in) = L-valine(out). In terms of biological role, uniport that mediates the transport of neutral amino acids such as L-leucine, L-isoleucine, L-valine, and L-phenylalanine. The transport activity is sodium ions-independent, electroneutral and mediated by a facilitated diffusion. The sequence is that of Large neutral amino acids transporter small subunit 3 from Homo sapiens (Human).